The following is a 463-amino-acid chain: Quinolone resistance protein NorB (463 aa).

Helical transmembrane passes span 17-37, 53-73, 86-106, 107-127, 142-162, 165-185, 201-221, 230-250, 273-293, 299-319, 334-354, 357-377, 403-423, and 435-455; these read IGIVLSVITFWLFAQSLVNVV, IAVSITALFSGMFVVGAGGLA, IILNILGSLLIIISNIPLLLI, IGRLIQGLSAACIMPATLSII, YWSIGSWGGSGVCSFFGGAVA, LGWRWIFILSIIISLIALFLI, FDIKGLVLLVIMLLTLNILIT, SLLFITLLAIAIGSFSLFIVL, TASNFLLNGVAGTLIVANTFV, YSSLQAGSLSITYLVMVLIMI, PMLIGTGVLIVGECLISLTFL, ILYVICCIIGYLFFGLGLGIY, MASALGGAFGVALSGAVYAIV, and IALWLNAGMGILSFVIILLLV.

This sequence belongs to the major facilitator superfamily. TCR/Tet family.

It localises to the cell membrane. Multidrug efflux pump that acts independently of NorA and is one of the factors that confers resistance against diverse quinolones and chemical compounds. The protein is Quinolone resistance protein NorB (norB) of Staphylococcus aureus (strain Mu3 / ATCC 700698).